The sequence spans 309 residues: UDP-3-O-acyl-N-acetylglucosamine deacetylase (309 aa).

The Zn(2+) site is built by H78, H237, and D241. The active-site Proton donor is H264.

It belongs to the LpxC family. Requires Zn(2+) as cofactor.

The enzyme catalyses a UDP-3-O-[(3R)-3-hydroxyacyl]-N-acetyl-alpha-D-glucosamine + H2O = a UDP-3-O-[(3R)-3-hydroxyacyl]-alpha-D-glucosamine + acetate. The protein operates within glycolipid biosynthesis; lipid IV(A) biosynthesis; lipid IV(A) from (3R)-3-hydroxytetradecanoyl-[acyl-carrier-protein] and UDP-N-acetyl-alpha-D-glucosamine: step 2/6. In terms of biological role, catalyzes the hydrolysis of UDP-3-O-myristoyl-N-acetylglucosamine to form UDP-3-O-myristoylglucosamine and acetate, the committed step in lipid A biosynthesis. The polypeptide is UDP-3-O-acyl-N-acetylglucosamine deacetylase (Methylobacillus flagellatus (strain ATCC 51484 / DSM 6875 / VKM B-1610 / KT)).